Consider the following 80-residue polypeptide: UPF0270 protein VFMJ11_0205 (80 aa).

This sequence belongs to the UPF0270 family.

The chain is UPF0270 protein VFMJ11_0205 from Aliivibrio fischeri (strain MJ11) (Vibrio fischeri).